Consider the following 167-residue polypeptide: Cytochrome c-type biogenesis protein CcmE (167 aa).

At 1-7 (MTRKTRR) the chain is on the cytoplasmic side. The chain crosses the membrane as a helical; Signal-anchor for type II membrane protein span at residues 8-28 (LWIVIACLACVGSAAALTLRA). The Periplasmic portion of the chain corresponds to 29-167 (FSSNIVFFMA…DTMTAKKAGG (139 aa)). 2 residues coordinate heme: histidine 125 and tyrosine 129. Positions 141–150 (TGKWDPRFGK) are enriched in basic and acidic residues. Residues 141–167 (TGKWDPRFGKAPDASSWDTMTAKKAGG) form a disordered region.

The protein belongs to the CcmE/CycJ family.

Its subcellular location is the cell inner membrane. Heme chaperone required for the biogenesis of c-type cytochromes. Transiently binds heme delivered by CcmC and transfers the heme to apo-cytochromes in a process facilitated by CcmF and CcmH. The sequence is that of Cytochrome c-type biogenesis protein CcmE from Gluconobacter oxydans (strain 621H) (Gluconobacter suboxydans).